The chain runs to 391 residues: Choline/ethanolaminephosphotransferase 1 (391 aa).

Residues 1–49 (MGYFVPDSHIENLKSYKYQSEDRSLVSKYFLKPFWQRFCHIFPTWMAPN) are Lumenal-facing. A helical membrane pass occupies residues 50 to 69 (IITLSGFAFIVINVLTVFYY). Residues 70 to 172 (DPNLNTDTPR…YHTHTLYLSE (103 aa)) lie on the Cytoplasmic side of the membrane. Residues 173-193 (FSGPVEGILIVCVSLILTGIY) form a helical membrane-spanning segment. At 194–211 (GKQVIWHTYLFTITVGDK) the chain is on the lumenal side. The chain crosses the membrane as a helical span at residues 212–232 (VIDVDTLDIVFSLAVFGLVMN). At 233 to 264 (ALSAKRNVDKYYRNSTSSANNITQIEQDSAIK) the chain is on the cytoplasmic side. The chain crosses the membrane as a helical span at residues 265 to 282 (GLLPFFAYYASIALLVWM). The Lumenal segment spans residues 283-285 (QPS). A helical membrane pass occupies residues 286 to 308 (FITLSFILSVGFTGAFTVGRIIV). Over 309 to 321 (CHLTKQSFPMFNA) the chain is Cytoplasmic. A helical transmembrane segment spans residues 322–342 (PMLIPLCQIVLYKICLSLWGI). Topologically, residues 343 to 346 (ESNK) are lumenal. The helical transmembrane segment at 347–367 (IVFALSWLGFGLSLGVHIMFM) threads the bilayer. Residues 368–391 (NDIIHEFTEYLDVYALSIKRSKLT) lie on the Cytoplasmic side of the membrane.

Belongs to the CDP-alcohol phosphatidyltransferase class-I family. The cofactor is Mg(2+).

The protein localises to the golgi apparatus membrane. The catalysed reaction is CDP-ethanolamine + a 1,2-diacyl-sn-glycerol = a 1,2-diacyl-sn-glycero-3-phosphoethanolamine + CMP + H(+). The enzyme catalyses CDP-choline + a 1,2-diacyl-sn-glycerol = a 1,2-diacyl-sn-glycero-3-phosphocholine + CMP + H(+). It carries out the reaction CDP-N-methylethanolamine + a 1,2-diacyl-sn-glycerol = a 1,2-diacyl-sn-glycero-3-phospho-N-methylethanolamine + CMP + H(+). It catalyses the reaction CDP-N,N-dimethylethanolamine + a 1,2-diacyl-sn-glycerol = a 1,2-diacyl-sn-glycero-3-phospho-N,N-dimethylethanolamine + CMP + H(+). The catalysed reaction is 1,2-di-(9Z-octadecenoyl)-glycerol + CDP-choline = 1,2-di-(9Z-octadecenoyl)-sn-glycero-3-phosphocholine + CMP + H(+). The enzyme catalyses 1,2-di-(9Z-octadecenoyl)-glycerol + CDP-ethanolamine = 1,2-di-(9Z-octadecenoyl)-sn-glycero-3-phosphoethanolamine + CMP + H(+). Its pathway is phospholipid metabolism; phosphatidylethanolamine biosynthesis; phosphatidylethanolamine from ethanolamine: step 3/3. It participates in phospholipid metabolism; phosphatidylcholine biosynthesis; phosphatidylcholine from phosphocholine: step 2/2. Its activity is regulated as follows. Requires a divalent cation activator, and is inhibited by CMP. Activated by phospholipids, especially phosphatidylcholine. Catalyzes the final step in the CDP-ethanolamine route leading to phosphatidylethanolamine (PE). Can also catalyze the formation of phosphatidylcholine (PC) from CDP-choline, but does not substantially contribute to PC biosynthesis. Preferentially uses CDP-dimethylethanolamine and CDP-propanolamine as aminoalcohol substrates. Shows highest activity toward di-unsaturated diacylglycerol species as lipid substrates. The CDP-ethanolamine pathway may play a role in maintaining the proper PE species distribution. This chain is Choline/ethanolaminephosphotransferase 1 (EPT1), found in Saccharomyces cerevisiae (strain ATCC 204508 / S288c) (Baker's yeast).